A 781-amino-acid chain; its full sequence is Dynamin-related protein dnm1 (781 aa).

The region spanning 23–328 is the Dynamin-type G domain; sequence FLDLPSIVVV…LVSHIRERLP (306 aa). A G1 motif region spans residues 33-40; that stretch reads GSQSCGKS. GTP is bound at residue 33-40; that stretch reads GSQSCGKS. A G2 motif region spans residues 59-61; sequence VTR. The disordered stretch occupies residues 76–103; the sequence is KNNHDEESTSDNNSEETSAAGETGSLEG. A G3 motif region spans residues 170 to 173; sequence DLPG. GTP-binding positions include 170–174 and 239–242; these read DLPGL and TKLD. The interval 239-242 is G4 motif; the sequence is TKLD. Positions 269 to 272 are G5 motif; that stretch reads VNRS. The GED domain maps to 694–781; the sequence is VDLIKELITS…QANKIISTVF (88 aa).

The protein belongs to the TRAFAC class dynamin-like GTPase superfamily. Dynamin/Fzo/YdjA family.

It is found in the cytoplasm. The protein localises to the mitochondrion outer membrane. It catalyses the reaction GTP + H2O = GDP + phosphate + H(+). Its function is as follows. Microtubule-associated force-producing protein that mediates mitochondrial fission during interphasic growth and at cell division. Fission of mitochondria occurs in many cell types and constitutes an important step in mitochondria morphology, which is balanced between fusion and fission. With vps1, acts redundantly in peroxisome biogenesis, which is under cell cycle control. The protein is Dynamin-related protein dnm1 (dnm1) of Schizosaccharomyces pombe (strain 972 / ATCC 24843) (Fission yeast).